A 535-amino-acid polypeptide reads, in one-letter code: MKNISEIINIPEDYYDLYGRYIAKVSLNVLDYLKNKRYGKLILVTAMTPTPAGEGKTTTAIGLGNALKLLGKNAGIAIREPSLGPCFGVKGGATGGGKSTVEPSNKINLMFTGDFPAVSAAHNLLSAVINNHMYHGNELKLDPKNIVFPRTIDMDDRSLRSIIVGSGDRSTGVMMNDKYVITAASEVMAILALSRNYNELKQRLGNIMIGYNLNKAPIFARDLKVHGAMASLLVDALRPNIAQTSEHVPAIIHTGPFGNIAHGTSSILGDIIGLKMFDYLVTEAGFGSDLGFEKFIDIVLRLSDFKLSAVVLVATVRAMRYHGGGRINEPDVNAVLRGSENLMWHVQNIKKFGFNPVVAINRHSNDTDAEINAISNILTKNGVEFSISDAYSDGGHGALDLAGKVLKSISDYNPRYIYGINDDPEEKISKIAMNVYNANSVEFSHDAVKTMKLIKDDFSDLYVCMAKTQSSISDNAKLINVPEGFTVKINGININSGSGFIIPLLGNIMTMPGLPRRPASENIDIDDYGNITGLQ.

50–57 (TPAGEGKT) is an ATP binding site.

Belongs to the formate--tetrahydrofolate ligase family.

It catalyses the reaction (6S)-5,6,7,8-tetrahydrofolate + formate + ATP = (6R)-10-formyltetrahydrofolate + ADP + phosphate. It functions in the pathway one-carbon metabolism; tetrahydrofolate interconversion. The chain is Formate--tetrahydrofolate ligase from Picrophilus torridus (strain ATCC 700027 / DSM 9790 / JCM 10055 / NBRC 100828 / KAW 2/3).